A 263-amino-acid chain; its full sequence is Proteasome subunit beta type-5 (263 aa).

A propeptide spans 1 to 59 (MALASVLERPLSVNRRGFFGLGGRADLLDLGPGSPSDGLSLAAPSWGVPEEPRIEILHG) (removed in mature form). The active-site Nucleophile is threonine 60. Alanine 108 contributes to the bortezomib binding site.

The protein belongs to the peptidase T1B family. As to quaternary structure, the 26S proteasome consists of a 20S proteasome core and two 19S regulatory subunits. The 20S proteasome core is a barrel-shaped complex made of 28 subunits that are arranged in four stacked rings. The two outer rings are each formed by seven alpha subunits, and the two inner rings are formed by seven beta subunits. The proteolytic activity is exerted by three beta-subunits PSMB5, PSMB6 and PSMB7. Directly interacts with POMP. Interacts with ABCB1 and TAP1.

It localises to the cytoplasm. The protein resides in the nucleus. The catalysed reaction is Cleavage of peptide bonds with very broad specificity.. Functionally, component of the 20S core proteasome complex involved in the proteolytic degradation of most intracellular proteins. This complex plays numerous essential roles within the cell by associating with different regulatory particles. Associated with two 19S regulatory particles, forms the 26S proteasome and thus participates in the ATP-dependent degradation of ubiquitinated proteins. The 26S proteasome plays a key role in the maintenance of protein homeostasis by removing misfolded or damaged proteins that could impair cellular functions, and by removing proteins whose functions are no longer required. Associated with the PA200 or PA28, the 20S proteasome mediates ubiquitin-independent protein degradation. This type of proteolysis is required in several pathways including spermatogenesis (20S-PA200 complex) or generation of a subset of MHC class I-presented antigenic peptides (20S-PA28 complex). Within the 20S core complex, PSMB5 displays a chymotrypsin-like activity. The protein is Proteasome subunit beta type-5 of Bos taurus (Bovine).